The chain runs to 50 residues: Protein PndA (50 aa).

The helical transmembrane segment at 5–25 threads the bilayer; it reads TFLMMLIVICVTILCFVWMVR.

It belongs to the Hok/Gef family.

It is found in the cell inner membrane. In terms of biological role, toxic component of a type I toxin-antitoxin (TA) system. When expressed is involved in cellular Mg(2+) release and degradation of stable RNA. The sequence is that of Protein PndA (pndA) from Escherichia coli.